The chain runs to 150 residues: Transmembrane protein PMIS2 (150 aa).

Low complexity predominate over residues 1–12 (MALKPPSATQPA). The segment at 1–61 (MALKPPSATQ…EPQEPTQTPE (61 aa)) is disordered. Positions 13-22 (PNAPATPDAP) are enriched in pro residues. A compositionally biased stretch (low complexity) spans 23-61 (PTTGDPGASAAPGSPTTTGGPGAPAEVPQEPQEPTQTPE). Transmembrane regions (helical) follow at residues 71-91 (LCLT…ALYF) and 130-150 (GWFG…LVLY).

This sequence belongs to the CD225/Dispanin family.

The protein resides in the membrane. Functionally, may play a role in spermatozoa mobility. The chain is Transmembrane protein PMIS2 from Homo sapiens (Human).